A 485-amino-acid polypeptide reads, in one-letter code: Protein LAZ1 (485 aa).

At 1–19 (MDILKSYHLLAAAYSAPAW) the chain is on the cytoplasmic side. A helical transmembrane segment spans residues 20–40 (ASFMAGAFLVLTLSLSLFLVF). Over 41 to 53 (DHLSTYKNPEEQK) the chain is Lumenal. Residues 54–74 (FLIGVILMVPCYSIESFASLV) traverse the membrane as a helical segment. At 75 to 167 (KPSISVDCGI…QVVKFGIVQY (93 aa)) the chain is on the cytoplasmic side. The helical transmembrane segment at 168-188 (MIIKSLTALTALILEAFGVYC) threads the bilayer. The Lumenal portion of the chain corresponds to 189–196 (EGEFKWGC). Residues 197 to 217 (GYPYLAVVLNFSQSWALYCLV) form a helical membrane-spanning segment. Over 218–241 (QFYGATKDELAHIQPLAKFLTFKS) the chain is Cytoplasmic. Residues 242–262 (IVFLTWWQGVAIALLSSLGLF) form a helical membrane-spanning segment. At 263–277 (KSSIAQSLQLKTSVQ) the chain is on the lumenal side. The helical transmembrane segment at 278-298 (DFIICIEMGIASVVHLYVFPA) threads the bilayer. At 299 to 485 (KPYGLMGDRF…VRGRRWITKD (187 aa)) the chain is on the cytoplasmic side. A coiled-coil region spans residues 384-415 (MEKSITKFNEKLHKISQNIKKHDKEKRRVKDD). A disordered region spans residues 400–485 (QNIKKHDKEK…VRGRRWITKD (86 aa)). The span at 403-416 (KKHDKEKRRVKDDS) shows a compositional bias: basic and acidic residues. Over residues 455 to 469 (GYTSAESGGESSSDQ) the composition is skewed to polar residues. Basic and acidic residues predominate over residues 476-485 (VRGRRWITKD).

Belongs to the TMEM184 family.

It is found in the endomembrane system. It localises to the cell membrane. The protein localises to the cytoplasm. The protein resides in the cytosol. Functionally, required for programmed cell death (PCD) associated with hypersensitive response (HR). Involved both in the induction of EDS1/PAD4 mediated HR and in accelerated cell death in the acd11 mutant. Not required for HR induction elicited through pathways exclusively dependent on CC-NB-LRR resistance proteins. The polypeptide is Protein LAZ1 (Arabidopsis thaliana (Mouse-ear cress)).